The following is a 414-amino-acid chain: Deoxyuridine 5'-triphosphate nucleotidohydrolase (414 aa).

Substrate-binding positions include 327–329 (RSS) and 409–410 (FG).

It belongs to the dUTPase family. Mg(2+) serves as cofactor.

The catalysed reaction is dUTP + H2O = dUMP + diphosphate + H(+). Involved in nucleotide metabolism: produces dUMP, the immediate precursor of thymidine nucleotides and decreases the intracellular concentration of dUTP to avoid uracil incorporation into viral DNA. The sequence is that of Deoxyuridine 5'-triphosphate nucleotidohydrolase from Amazona oratrix (yellow-headed parrot).